The sequence spans 160 residues: Sulfur-rich protein (160 aa).

Transmembrane regions (helical) follow at residues 63 to 83 (ITMI…TFVL) and 92 to 112 (FLFL…SVFM).

Its subcellular location is the membrane. The sequence is that of Sulfur-rich protein (srp) from Chlamydia abortus (strain DSM 27085 / S26/3) (Chlamydophila abortus).